A 140-amino-acid chain; its full sequence is Large ribosomal subunit protein bL17 (140 aa).

The protein belongs to the bacterial ribosomal protein bL17 family. Part of the 50S ribosomal subunit. Contacts protein L32.

In Ruegeria pomeroyi (strain ATCC 700808 / DSM 15171 / DSS-3) (Silicibacter pomeroyi), this protein is Large ribosomal subunit protein bL17.